Here is an 89-residue protein sequence, read N- to C-terminus: NADH-ubiquinone oxidoreductase chain 4L (89 aa).

3 helical membrane passes run 1 to 21 (MNIT…NRKN), 22 to 42 (IILM…LILV), and 57 to 77 (IYII…LVAF).

It belongs to the complex I subunit 4L family.

The protein resides in the mitochondrion membrane. The catalysed reaction is a ubiquinone + NADH + 5 H(+)(in) = a ubiquinol + NAD(+) + 4 H(+)(out). Functionally, core subunit of the mitochondrial membrane respiratory chain NADH dehydrogenase (Complex I) that is believed to belong to the minimal assembly required for catalysis. Complex I functions in the transfer of electrons from NADH to the respiratory chain. The immediate electron acceptor for the enzyme is believed to be ubiquinone. The sequence is that of NADH-ubiquinone oxidoreductase chain 4L (ndh-4L) from Neurospora crassa (strain ATCC 24698 / 74-OR23-1A / CBS 708.71 / DSM 1257 / FGSC 987).